A 169-amino-acid chain; its full sequence is Ribosome maturation factor RimM (169 aa).

The PRC barrel domain maps to 97 to 169 (EDEYYWTDLV…IITADWGLDY (73 aa)).

It belongs to the RimM family. Binds ribosomal protein uS19.

The protein localises to the cytoplasm. In terms of biological role, an accessory protein needed during the final step in the assembly of 30S ribosomal subunit, possibly for assembly of the head region. Essential for efficient processing of 16S rRNA. May be needed both before and after RbfA during the maturation of 16S rRNA. It has affinity for free ribosomal 30S subunits but not for 70S ribosomes. The chain is Ribosome maturation factor RimM from Neisseria meningitidis serogroup C / serotype 2a (strain ATCC 700532 / DSM 15464 / FAM18).